A 275-amino-acid polypeptide reads, in one-letter code: Large ribosomal subunit protein uL2 (275 aa).

A disordered region spans residues 223–275 (VAMNPVDHPHGGGEGRTSGGRHPVSPWGQPTKGYKTRSNKRTDKYIVRRRNKK).

This sequence belongs to the universal ribosomal protein uL2 family. In terms of assembly, part of the 50S ribosomal subunit. Forms a bridge to the 30S subunit in the 70S ribosome.

Functionally, one of the primary rRNA binding proteins. Required for association of the 30S and 50S subunits to form the 70S ribosome, for tRNA binding and peptide bond formation. It has been suggested to have peptidyltransferase activity; this is somewhat controversial. Makes several contacts with the 16S rRNA in the 70S ribosome. In Shewanella piezotolerans (strain WP3 / JCM 13877), this protein is Large ribosomal subunit protein uL2.